Consider the following 276-residue polypeptide: Undecaprenyl-diphosphatase (276 aa).

Transmembrane regions (helical) follow at residues 84-104 (YRLG…GLFF), 115-135 (LWVV…AEYV), 188-208 (FGFL…LPDA), 222-242 (QLLV…AWLL), and 250-270 (MYWF…LLAT).

Belongs to the UppP family.

Its subcellular location is the cell membrane. It carries out the reaction di-trans,octa-cis-undecaprenyl diphosphate + H2O = di-trans,octa-cis-undecaprenyl phosphate + phosphate + H(+). Catalyzes the dephosphorylation of undecaprenyl diphosphate (UPP). Confers resistance to bacitracin. The polypeptide is Undecaprenyl-diphosphatase (Mycobacterium tuberculosis (strain ATCC 25177 / H37Ra)).